The sequence spans 320 residues: Protein HEXIM1 (320 aa).

The segment at 1–124 is disordered; the sequence is MAEPLLSEFQ…RRRPSKKKRL (124 aa). Positions 9–19 are enriched in polar residues; the sequence is FQHQPQTSNCT. Positions 24-47 are enriched in basic and acidic residues; sequence VHEERNPDRPPGAEERVPEEDSRW. Phosphoserine is present on Ser98. The span at 109 to 124 shows a compositional bias: basic residues; the sequence is VGKKKHRRRPSKKKRL. Positions 111–138 are basic region; mediates nuclear localization and interaction with 7SK snRNA and NR3C1; sequence KKKHRRRPSKKKRLWKPYYTLTWEEKKK. The tract at residues 163-166 is interaction with P-TEFb; that stretch reads PYNT. Residues 171 to 211 are autoinhibitory acidic region; in absence of 7SK snRNA interacts with the basic region preventing interaction with P-TEFb and modulating subcellular localization; sequence MDDHDQEEPDLKTGLYPKRAAAKSDDTSDEDFMEEAGEEDG. Residues 174-223 are disordered; that stretch reads HDQEEPDLKTGLYPKRAAAKSDDTSDEDFMEEAGEEDGGSDGMGGDGSEF. Residue Ser194 is modified to Phosphoserine. Thr197 is modified (phosphothreonine). A compositionally biased stretch (acidic residues) spans 197–212; sequence TSDEDFMEEAGEEDGG. Residues Ser198, Ser213, and Ser221 each carry the phosphoserine modification. The stretch at 244–310 forms a coiled coil; sequence SKQELIKEYL…LTENELHRQQ (67 aa). Positions 247 to 275 are mediates interaction with CCNT1; sequence ELIKEYLELEKCLSRMEDENNRLRLESQR. Residues 271–316 form a required for inhibition of ESR1-dependent transcription region; it reads LESQRLDGDDARVRELELELDRLRAENLQLLTENELHRQQERAPLS.

This sequence belongs to the HEXIM family. As to quaternary structure, homooligomer and heterooligomer with HEXIM2; probably dimeric. Core component of the 7SK RNP complex, at least composed of 7SK RNA, LARP7, MEPCE, HEXIM1 (or HEXIM2) and P-TEFb (composed of CDK9 and CCNT1/cyclin-T1). Interacts with the N-CoR complex through NCOR1. Interacts with ESR1 and NR3C1. May interact with NF-kappa-B through RELA. Interacts with CCNT2; mediates formation of a tripartite complex with KPNA2. Part of the HDP-RNP complex composed of at least HEXIM1, PRKDC, XRCC5, XRCC6, paraspeckle proteins (SFPQ, NONO, PSPC1, RBM14, and MATR3) and NEAT1 non-coding RNA.

The protein resides in the nucleus. Its subcellular location is the cytoplasm. Its function is as follows. Transcriptional regulator which functions as a general RNA polymerase II transcription inhibitor. Core component of the 7SK RNP complex: in cooperation with 7SK snRNA sequesters P-TEFb in a large inactive 7SK snRNP complex preventing RNA polymerase II phosphorylation and subsequent transcriptional elongation. May also regulate NF-kappa-B, ESR1, NR3C1 and CIITA-dependent transcriptional activity. Plays a role in the regulation of DNA virus-mediated innate immune response by assembling into the HDP-RNP complex, a complex that serves as a platform for IRF3 phosphorylation and subsequent innate immune response activation through the cGAS-STING pathway. The chain is Protein HEXIM1 (HEXIM1) from Bos taurus (Bovine).